A 614-amino-acid polypeptide reads, in one-letter code: Probable peptide-binding protein YejA (614 aa).

An N-terminal signal peptide occupies residues 1–27 (MILAPLKSRILIALAASALLIPAVASA).

It belongs to the bacterial solute-binding protein 5 family. In terms of assembly, the complex is composed of one ATP-binding protein (YejF), two transmembrane proteins (YejB and YejE) and a solute-binding protein (YejA).

Its subcellular location is the periplasm. In terms of biological role, probably part of the ABC transporter complex YejABEF, which is likely involved in broad-spectrum peptide import. The protein is Probable peptide-binding protein YejA of Agrobacterium fabrum (strain C58 / ATCC 33970) (Agrobacterium tumefaciens (strain C58)).